Consider the following 337-residue polypeptide: Anthranilate phosphoribosyltransferase (337 aa).

Residues G82, 85–86 (GD), T90, 92–95 (NIST), 110–118 (KHGGRSVSS), and S122 each bind 5-phospho-alpha-D-ribose 1-diphosphate. Position 82 (G82) interacts with anthranilate. A Mg(2+)-binding site is contributed by S94. Residue R168 participates in anthranilate binding. Mg(2+) is bound by residues D226 and E227.

It belongs to the anthranilate phosphoribosyltransferase family. As to quaternary structure, homodimer. The cofactor is Mg(2+).

The enzyme catalyses N-(5-phospho-beta-D-ribosyl)anthranilate + diphosphate = 5-phospho-alpha-D-ribose 1-diphosphate + anthranilate. It functions in the pathway amino-acid biosynthesis; L-tryptophan biosynthesis; L-tryptophan from chorismate: step 2/5. Functionally, catalyzes the transfer of the phosphoribosyl group of 5-phosphorylribose-1-pyrophosphate (PRPP) to anthranilate to yield N-(5'-phosphoribosyl)-anthranilate (PRA). The sequence is that of Anthranilate phosphoribosyltransferase from Francisella tularensis subsp. novicida (strain U112).